A 124-amino-acid chain; its full sequence is MEYEFRRNSLTGTYLASFSMDHEVLGQWFSEELGPELAKIQQVLDIIKDIQAGKRDSWRLIGGDLTLDLDEEQARIYANALGFEQEYELEESMSLYDAESEAYCGLEDLEEALLSWYKFVEKGR.

Belongs to the UPF0231 family.

This Shewanella sp. (strain MR-7) protein is UPF0231 protein Shewmr7_3366.